We begin with the raw amino-acid sequence, 279 residues long: Thymidylate synthase (279 aa).

Residue 133-134 (RR) participates in dUMP binding. Catalysis depends on C154, which acts as the Nucleophile. Residues 178–181 (RSND), N189, and 219–221 (HIY) contribute to the dUMP site. D181 contacts (6R)-5,10-methylene-5,6,7,8-tetrahydrofolate. Residue A278 participates in (6R)-5,10-methylene-5,6,7,8-tetrahydrofolate binding.

The protein belongs to the thymidylate synthase family. Bacterial-type ThyA subfamily. Homodimer.

The protein localises to the cytoplasm. The catalysed reaction is dUMP + (6R)-5,10-methylene-5,6,7,8-tetrahydrofolate = 7,8-dihydrofolate + dTMP. The protein operates within pyrimidine metabolism; dTTP biosynthesis. In terms of biological role, catalyzes the reductive methylation of 2'-deoxyuridine-5'-monophosphate (dUMP) to 2'-deoxythymidine-5'-monophosphate (dTMP) while utilizing 5,10-methylenetetrahydrofolate (mTHF) as the methyl donor and reductant in the reaction, yielding dihydrofolate (DHF) as a by-product. This enzymatic reaction provides an intracellular de novo source of dTMP, an essential precursor for DNA biosynthesis. This chain is Thymidylate synthase, found in Streptococcus suis (strain 05ZYH33).